The chain runs to 356 residues: 4-hydroxy-3-methylbut-2-en-1-yl diphosphate synthase (flavodoxin) (356 aa).

Residues cysteine 264, cysteine 267, cysteine 299, and glutamate 306 each coordinate [4Fe-4S] cluster.

Belongs to the IspG family. It depends on [4Fe-4S] cluster as a cofactor.

It carries out the reaction (2E)-4-hydroxy-3-methylbut-2-enyl diphosphate + oxidized [flavodoxin] + H2O + 2 H(+) = 2-C-methyl-D-erythritol 2,4-cyclic diphosphate + reduced [flavodoxin]. It participates in isoprenoid biosynthesis; isopentenyl diphosphate biosynthesis via DXP pathway; isopentenyl diphosphate from 1-deoxy-D-xylulose 5-phosphate: step 5/6. Functionally, converts 2C-methyl-D-erythritol 2,4-cyclodiphosphate (ME-2,4cPP) into 1-hydroxy-2-methyl-2-(E)-butenyl 4-diphosphate. The sequence is that of 4-hydroxy-3-methylbut-2-en-1-yl diphosphate synthase (flavodoxin) from Natranaerobius thermophilus (strain ATCC BAA-1301 / DSM 18059 / JW/NM-WN-LF).